The following is a 189-amino-acid chain: GMP synthase [glutamine-hydrolyzing] subunit A (189 aa).

In terms of domain architecture, Glutamine amidotransferase type-1 spans 5 to 189 (KILVVNNYGQ…TNFFEVCDRY (185 aa)). The active-site Nucleophile is the Cys79. Active-site residues include His166 and Glu168.

Heterodimer composed of a glutamine amidotransferase subunit (A) and a GMP-binding subunit (B).

It catalyses the reaction XMP + L-glutamine + ATP + H2O = GMP + L-glutamate + AMP + diphosphate + 2 H(+). It participates in purine metabolism; GMP biosynthesis; GMP from XMP (L-Gln route): step 1/1. Catalyzes the synthesis of GMP from XMP. The polypeptide is GMP synthase [glutamine-hydrolyzing] subunit A (Methanosarcina acetivorans (strain ATCC 35395 / DSM 2834 / JCM 12185 / C2A)).